Here is a 164-residue protein sequence, read N- to C-terminus: Cyanate hydratase (164 aa).

Catalysis depends on residues Arg104, Glu107, and Ser130.

Belongs to the cyanase family.

The enzyme catalyses cyanate + hydrogencarbonate + 3 H(+) = NH4(+) + 2 CO2. In terms of biological role, catalyzes the reaction of cyanate with bicarbonate to produce ammonia and carbon dioxide. The chain is Cyanate hydratase from Botryotinia fuckeliana (strain B05.10) (Noble rot fungus).